We begin with the raw amino-acid sequence, 346 residues long: S-adenosylmethionine:tRNA ribosyltransferase-isomerase (346 aa).

The protein belongs to the QueA family. Monomer.

It localises to the cytoplasm. The enzyme catalyses 7-aminomethyl-7-carbaguanosine(34) in tRNA + S-adenosyl-L-methionine = epoxyqueuosine(34) in tRNA + adenine + L-methionine + 2 H(+). The protein operates within tRNA modification; tRNA-queuosine biosynthesis. Its function is as follows. Transfers and isomerizes the ribose moiety from AdoMet to the 7-aminomethyl group of 7-deazaguanine (preQ1-tRNA) to give epoxyqueuosine (oQ-tRNA). The sequence is that of S-adenosylmethionine:tRNA ribosyltransferase-isomerase from Lactococcus lactis subsp. cremoris (strain MG1363).